The following is a 175-amino-acid chain: Lipoprotein signal peptidase (175 aa).

A run of 4 helical transmembrane segments spans residues 25–45, 56–76, 81–101, and 110–130; these read LWMA…IVIV, VTGF…SFLA, WQRW…VWLL, and FCFA…DRVV. Catalysis depends on residues D136 and D154. The helical transmembrane segment at 146-166 threads the bilayer; the sequence is HWPAFNVADCAITVGAVLLIV.

This sequence belongs to the peptidase A8 family.

It is found in the cell inner membrane. The enzyme catalyses Release of signal peptides from bacterial membrane prolipoproteins. Hydrolyzes -Xaa-Yaa-Zaa-|-(S,diacylglyceryl)Cys-, in which Xaa is hydrophobic (preferably Leu), and Yaa (Ala or Ser) and Zaa (Gly or Ala) have small, neutral side chains.. Its pathway is protein modification; lipoprotein biosynthesis (signal peptide cleavage). This protein specifically catalyzes the removal of signal peptides from prolipoproteins. The chain is Lipoprotein signal peptidase from Cupriavidus necator (strain ATCC 17699 / DSM 428 / KCTC 22496 / NCIMB 10442 / H16 / Stanier 337) (Ralstonia eutropha).